Consider the following 485-residue polypeptide: MAKSPAAVKAEVRRMRRIRRIHFVGIGGVGMCGIAEVLLNLGYEVSGSDLKESASTERLQSFGAQIFIGHQAGNVAGADVLVVSSAINSANPEVALALEQRIPVVPRAEMLAELMRYRHGIAVAGTHGKTTTTSLLASVFAAGGLDPTFVIGGRLTAAGTNAQLGSSRYLIAEADESDASFLHLQPMVAVVTNIDADHMSTYGGDFGKLKKTFVEFLHNLPFYGLAVLCVDDPVVREIIPQIGRPTTTYGFSEDADVRAINVRQEGMRTYFTVLRDGCEPLDVSVHMPGNHNVLNALATIAIATDEGIDDEAIVQGLAEFAGVGRRFQVYGNLPVDGGSVMLVDDYGHHPREVAAVIKAVRGGWPERRLVMVYQPHRYSRTRDLYDDFVQVLGESNVLLLMEVYPAGEEPIPGADSRQLCHSIRQRGQLDPIYVERGVDLAPLVKPLLRAGDILLCQGAGDIGGLAPQLLKSPLFGGDDAARKTK.

125-131 provides a ligand contact to ATP; it reads GTHGKTT.

The protein belongs to the MurCDEF family.

The protein localises to the cytoplasm. The catalysed reaction is UDP-N-acetyl-alpha-D-muramate + L-alanine + ATP = UDP-N-acetyl-alpha-D-muramoyl-L-alanine + ADP + phosphate + H(+). It participates in cell wall biogenesis; peptidoglycan biosynthesis. Its function is as follows. Cell wall formation. The polypeptide is UDP-N-acetylmuramate--L-alanine ligase (Stutzerimonas stutzeri (strain A1501) (Pseudomonas stutzeri)).